Consider the following 71-residue polypeptide: Dermonecrotic toxin LgSicTox-alphaI-Loxn-A (71 aa).

The active site involves H12. The Mg(2+) site is built by E32, D34, and D48.

Mg(2+) serves as cofactor. Post-translationally, contains 2 disulfide bonds. In terms of tissue distribution, expressed by the venom gland.

The protein resides in the secreted. The catalysed reaction is an N-(acyl)-sphingosylphosphocholine = an N-(acyl)-sphingosyl-1,3-cyclic phosphate + choline. It carries out the reaction an N-(acyl)-sphingosylphosphoethanolamine = an N-(acyl)-sphingosyl-1,3-cyclic phosphate + ethanolamine. It catalyses the reaction a 1-acyl-sn-glycero-3-phosphocholine = a 1-acyl-sn-glycero-2,3-cyclic phosphate + choline. The enzyme catalyses a 1-acyl-sn-glycero-3-phosphoethanolamine = a 1-acyl-sn-glycero-2,3-cyclic phosphate + ethanolamine. In terms of biological role, catalyzes the hydrolysis of sphingomyelin. May also act on other phosphatidyl esters. Functionally, dermonecrotic toxins cleave the phosphodiester linkage between the phosphate and headgroup of certain phospholipids (sphingolipid and lysolipid substrates), forming an alcohol (often choline) and a cyclic phosphate. This toxin acts on sphingomyelin (SM). It may also act on ceramide phosphoethanolamine (CPE), lysophosphatidylcholine (LPC) and lysophosphatidylethanolamine (LPE), but not on lysophosphatidylserine (LPS), and lysophosphatidylglycerol (LPG). It acts by transphosphatidylation, releasing exclusively cyclic phosphate products as second products. In vivo, induces dermonecrosis, but is not lethal. Induces hemolysis, vascular permeability, edema, inflammatory response, and platelet aggregation. This is Dermonecrotic toxin LgSicTox-alphaI-Loxn-A from Loxosceles gaucho (Spider).